The following is a 312-amino-acid chain: Tetraacyldisaccharide 4'-kinase (312 aa).

An ATP-binding site is contributed by 60-67 (IAGGSGKT).

The protein belongs to the LpxK family.

The catalysed reaction is a lipid A disaccharide + ATP = a lipid IVA + ADP + H(+). The protein operates within glycolipid biosynthesis; lipid IV(A) biosynthesis; lipid IV(A) from (3R)-3-hydroxytetradecanoyl-[acyl-carrier-protein] and UDP-N-acetyl-alpha-D-glucosamine: step 6/6. Transfers the gamma-phosphate of ATP to the 4'-position of a tetraacyldisaccharide 1-phosphate intermediate (termed DS-1-P) to form tetraacyldisaccharide 1,4'-bis-phosphate (lipid IVA). In Helicobacter acinonychis (strain Sheeba), this protein is Tetraacyldisaccharide 4'-kinase.